The chain runs to 388 residues: tRNA (guanine(26)-N(2))-dimethyltransferase (388 aa).

One can recognise a Trm1 methyltransferase domain in the interval 4 to 383; it reads RTIVEGTTKI…APIAEIKKII (380 aa). S-adenosyl-L-methionine is bound by residues Arg-41, Arg-78, Asp-94, and Ala-123. Zn(2+) contacts are provided by Cys-251, Cys-254, Cys-271, and Cys-274.

The protein belongs to the class I-like SAM-binding methyltransferase superfamily. Trm1 family.

It carries out the reaction guanosine(26) in tRNA + 2 S-adenosyl-L-methionine = N(2)-dimethylguanosine(26) in tRNA + 2 S-adenosyl-L-homocysteine + 2 H(+). In terms of biological role, dimethylates a single guanine residue at position 26 of a number of tRNAs using S-adenosyl-L-methionine as donor of the methyl groups. The polypeptide is tRNA (guanine(26)-N(2))-dimethyltransferase (Methanosarcina acetivorans (strain ATCC 35395 / DSM 2834 / JCM 12185 / C2A)).